The chain runs to 406 residues: Na(+)/H(+) antiporter NhaA (406 aa).

12 helical membrane-spanning segments follow: residues 29–49 (FAGI…NNIF), 75–95 (FIEL…GLEM), 111–131 (ILPA…YMFF), 141–161 (GWAI…SFFS), 170–190 (AFII…LALF), 195–215 (INTP…ILNY), 220–240 (QLFY…ESGI), 242–262 (GTLC…GEFN), 278–298 (YFIL…YFAF), 306–326 (ILAL…LGIM), 349–369 (FYSI…IGSI), and 382–402 (AAVI…LKYC).

This sequence belongs to the NhaA Na(+)/H(+) (TC 2.A.33) antiporter family.

It localises to the cell inner membrane. The enzyme catalyses Na(+)(in) + 2 H(+)(out) = Na(+)(out) + 2 H(+)(in). Na(+)/H(+) antiporter that extrudes sodium in exchange for external protons. In Rickettsia massiliae (strain Mtu5), this protein is Na(+)/H(+) antiporter NhaA.